A 504-amino-acid chain; its full sequence is D-alanine--D-alanyl carrier protein ligase (504 aa).

152–153 contributes to the ATP binding site; the sequence is TS. A D-alanine-binding site is contributed by D197. 292-297 contacts ATP; the sequence is NTYGPT. Position 301 (V301) interacts with D-alanine. ATP contacts are provided by residues D383, 394–397, and K492; that span reads YNGR. K492 is a binding site for D-alanine.

The protein belongs to the ATP-dependent AMP-binding enzyme family. DltA subfamily.

Its subcellular location is the cytoplasm. It catalyses the reaction holo-[D-alanyl-carrier protein] + D-alanine + ATP = D-alanyl-[D-alanyl-carrier protein] + AMP + diphosphate. It participates in cell wall biogenesis; lipoteichoic acid biosynthesis. Functionally, catalyzes the first step in the D-alanylation of lipoteichoic acid (LTA), the activation of D-alanine and its transfer onto the D-alanyl carrier protein (Dcp) DltC. In an ATP-dependent two-step reaction, forms a high energy D-alanyl-AMP intermediate, followed by transfer of the D-alanyl residue as a thiol ester to the phosphopantheinyl prosthetic group of the Dcp. D-alanylation of LTA plays an important role in modulating the properties of the cell wall in Gram-positive bacteria, influencing the net charge of the cell wall. The chain is D-alanine--D-alanyl carrier protein ligase from Bacillus cereus (strain ATCC 10987 / NRS 248).